We begin with the raw amino-acid sequence, 541 residues long: Transmembrane protein 151 homolog (541 aa).

A run of 3 helical transmembrane segments spans residues 27-47 (GYGK…YATF), 73-93 (YNFV…MECW), and 254-274 (PWFL…SWPL). A disordered region spans residues 503–541 (ASISHSSSKDLKSLTLKSSSSNNNNNNSNNNNNDDPEHP). A compositionally biased stretch (low complexity) spans 515 to 535 (SLTLKSSSSNNNNNNSNNNNN).

Belongs to the TMEM151 family.

It localises to the membrane. The chain is Transmembrane protein 151 homolog from Caenorhabditis elegans.